The chain runs to 951 residues: Zinc fingers and homeoboxes protein 3 (951 aa).

Residues 1–66 (MASKRKSTTP…SSTDGSALAN (66 aa)) are disordered. Positions 42–58 (PSEAPEASSEAAPNPSS) are enriched in low complexity. 2 consecutive C2H2-type zinc fingers follow at residues 77–100 (YSCK…TSEH) and 109–132 (FVCT…AKCH). The disordered stretch occupies residues 198–249 (KENAPTQPGGEALPKPLAGETEGKEGDHTFINGATPVSQASANSTKPPHTAN). Over residues 232–244 (TPVSQASANSTKP) the composition is skewed to polar residues. The tract at residues 237 to 481 (ASANSTKPPH…LLTACPSITS (245 aa)) is required for homodimerization and interaction with NFYA. Positions 297–495 (LSSIPTYNAA…DANIYKNKKS (199 aa)) are required for repressor activity. 2 consecutive DNA-binding regions (homeobox) follow at residues 298 to 357 (SSIP…GISW) and 487 to 546 (ANIY…RNLK). The required for nuclear localization stretch occupies residues 490–548 (YKNKKSHEQLSALKGSFCRNQFPGQSEVEHLTKVTGLSTREVRKWFSDRRYHCRNLKGT). Phosphoserine is present on S597. Residues 605–664 (TPTKYKERAPEQLRVLESSFAQNPLPPEEELDRLRSETKMTRREIDGWFSERRKRVNAEE) constitute a DNA-binding region (homeobox 3). Disordered regions lie at residues 621 to 642 (ESSF…RSET) and 661 to 702 (NAEE…NGSS). Residues 661-674 (NAEETKKADGHAPQ) are compositionally biased toward basic and acidic residues. Residues 675-690 (EEAEGAEEEGRDEELA) are compositionally biased toward acidic residues. Residues S701 and S716 each carry the phosphoserine modification. 2 DNA-binding regions (homeobox) span residues 759 to 818 (PSRV…KNGQ) and 830 to 889 (FPPG…TRAV). The tract at residues 885 to 951 (ETRAVADTSS…PQSGRQLETD (67 aa)) is disordered. Residues S922 and S941 each carry the phosphoserine modification. The span at 937-951 (FDTSSPQSGRQLETD) shows a compositional bias: polar residues.

This sequence belongs to the ZHX family. As to quaternary structure, homodimer (via homeobox domain 1). Heterodimer with ZHX1 (via homeobox domain 1). Heterodimer with ZHX2 (via homeobox domain 1). Heterodimerization with ZHX1 is a prerequisite for repressor activity. Interacts with NFYA. In terms of tissue distribution, widely expressed.

It is found in the cytoplasm. The protein localises to the nucleus. Its function is as follows. Acts as a transcriptional repressor. Involved in the early stages of mesenchymal stem cell (MSC) osteogenic differentiation. Is a regulator of podocyte gene expression during primary glomerula disease. Binds to promoter DNA. This chain is Zinc fingers and homeoboxes protein 3 (Zhx3), found in Rattus norvegicus (Rat).